Reading from the N-terminus, the 87-residue chain is HssA/B-like protein 55 (87 aa).

Positions 1–13 (MTILSAITSISRP) are enriched in polar residues. A disordered region spans residues 1–31 (MTILSAITSISRPNKSSKSVVSSNGGSSLSM). Positions 14 to 31 (NKSSKSVVSSNGGSSLSM) are enriched in low complexity.

Belongs to the hssA/B family.

This is HssA/B-like protein 55 (hssl55) from Dictyostelium discoideum (Social amoeba).